An 86-amino-acid polypeptide reads, in one-letter code: Putative regulatory protein Dvul_2085 (86 aa).

It belongs to the RemA family.

The chain is Putative regulatory protein Dvul_2085 from Nitratidesulfovibrio vulgaris (strain DP4) (Desulfovibrio vulgaris).